Here is a 63-residue protein sequence, read N- to C-terminus: Putative transmembrane protein ORF63 (63 aa).

At 1–8 (MQSGNFTL) the chain is on the extracellular side. Residues 9 to 29 (EVIMYLINSILAFIMIFFTFV) form a helical membrane-spanning segment. The Cytoplasmic segment spans residues 30–31 (NP). A helical membrane pass occupies residues 32–52 (SLLKCQYWTYILVALITAIIF). Over 53 to 63 (HTGSKVGKSSG) the chain is Extracellular.

It localises to the host membrane. This Acidianus filamentous virus 1 (isolate United States/Yellowstone) (AFV-1) protein is Putative transmembrane protein ORF63.